Here is a 252-residue protein sequence, read N- to C-terminus: Ribosomal RNA small subunit methyltransferase J (252 aa).

S-adenosyl-L-methionine is bound by residues 101–102 (RD), 117–118 (ER), 153–154 (SS), and Asp171.

The protein belongs to the methyltransferase superfamily. RsmJ family.

It is found in the cytoplasm. The enzyme catalyses guanosine(1516) in 16S rRNA + S-adenosyl-L-methionine = N(2)-methylguanosine(1516) in 16S rRNA + S-adenosyl-L-homocysteine + H(+). In terms of biological role, specifically methylates the guanosine in position 1516 of 16S rRNA. This Salmonella typhimurium (strain LT2 / SGSC1412 / ATCC 700720) protein is Ribosomal RNA small subunit methyltransferase J.